The primary structure comprises 328 residues: 4-hydroxy-2-oxoglutarate aldolase, mitochondrial (328 aa).

The transit peptide at 1–26 directs the protein to the mitochondrion; it reads MFGRTLFPARVIALGSGLFRTPLRTL. 76–77 contacts substrate; that stretch reads SN. K195 (schiff-base intermediate with substrate) is an active-site residue. S197 and G221 together coordinate substrate.

This sequence belongs to the DapA family. In terms of assembly, homotetramer.

It localises to the mitochondrion. The catalysed reaction is (4S)-4-hydroxy-2-oxoglutarate = glyoxylate + pyruvate. The enzyme catalyses (4R)-4-hydroxy-2-oxoglutarate = glyoxylate + pyruvate. Inhibited by divalent cations. Catalyzes the final step in the metabolic pathway of hydroxyproline. The protein is 4-hydroxy-2-oxoglutarate aldolase, mitochondrial (hoga1) of Xenopus tropicalis (Western clawed frog).